The following is a 428-amino-acid chain: Mitochondrial distribution and morphology protein 12 (428 aa).

An SMP-LTD domain is found at 1–387 (MSFDINWNQL…WPSWICIDMN (387 aa)). Disordered stretches follow at residues 75 to 168 (VMNE…APPL) and 387 to 428 (NDDD…EAGE). Positions 81–96 (NDSKDEHLKNHGDGIN) are enriched in basic and acidic residues. The segment covering 106 to 133 (LDDEDEDDEDDDEDDEDEEEEDEDDYDD) has biased composition (acidic residues). Residues 146-161 (LNFNENSTTPSANSFA) show a composition bias toward polar residues. Residues 387 to 403 (NDDDDEEEEEEESEDND) show a composition bias toward acidic residues. Residues 412–428 (NDGKHGDGRTDETEAGE) are compositionally biased toward basic and acidic residues.

This sequence belongs to the MDM12 family. As to quaternary structure, component of the ER-mitochondria encounter structure (ERMES) or MDM complex, composed of MMM1, MDM10, MDM12 and MDM34. An MMM1 homodimer associates with one molecule of MDM12 on each side in a pairwise head-to-tail manner, and the SMP-LTD domains of MMM1 and MDM12 generate a continuous hydrophobic tunnel for phospholipid trafficking.

It is found in the mitochondrion outer membrane. The protein localises to the endoplasmic reticulum membrane. Functionally, component of the ERMES/MDM complex, which serves as a molecular tether to connect the endoplasmic reticulum (ER) and mitochondria. Components of this complex are involved in the control of mitochondrial shape and protein biogenesis, and function in nonvesicular lipid trafficking between the ER and mitochondria. MDM12 is required for the interaction of the ER-resident membrane protein MMM1 and the outer mitochondrial membrane-resident beta-barrel protein MDM10. The MDM12-MMM1 subcomplex functions in the major beta-barrel assembly pathway that is responsible for biogenesis of all mitochondrial outer membrane beta-barrel proteins, and acts in a late step after the SAM complex. The MDM10-MDM12-MMM1 subcomplex further acts in the TOM40-specific pathway after the action of the MDM12-MMM1 complex. Essential for establishing and maintaining the structure of mitochondria and maintenance of mtDNA nucleoids. The chain is Mitochondrial distribution and morphology protein 12 from Candida albicans (strain SC5314 / ATCC MYA-2876) (Yeast).